The primary structure comprises 304 residues: tRNA pseudouridine synthase B (304 aa).

The active-site Nucleophile is the D48.

The protein belongs to the pseudouridine synthase TruB family. Type 1 subfamily.

It carries out the reaction uridine(55) in tRNA = pseudouridine(55) in tRNA. In terms of biological role, responsible for synthesis of pseudouridine from uracil-55 in the psi GC loop of transfer RNAs. The polypeptide is tRNA pseudouridine synthase B (Pseudomonas aeruginosa (strain UCBPP-PA14)).